Reading from the N-terminus, the 667-residue chain is MWGRGFLQRARFAQLSPSSSSSRSLLSAASAAPPNLLYSHYQRGRWFGCSTANMAPVRDPNTLSNYDAWRTRHTTANLKIDFTAKCLRGSVILELESQTDKASKEIVLDSSYVTVNSIKLNSAPSLWETKARTEPNGSPVHIAVPEGAAKGEVVKVEIELATTDKCTALQWLTPAQTSDKAAPFMFSQCQAIHARSLFPCQDTPDVKSTYDFNITSPYVVVASGVPVPDETKDLGEEKLYKFQQKVPIPSYLFALSSGEIASAPVGKRSCVCTGPNELKASQWELEGDMDKFLEAAEKIVFPYRWGEYNVLVLPPSFPYGGMENPIFTFATPTIISGDKQNIDVIAHELAHSWSGNLVTSCSWEHFWLNEGWTMYLERRILASIHGGDAHFDFSAIRGWKALEEAIKEYGEDHEFTKLCISHKGIDPDDAFSTVPYEKGFHFVWSLDRLVGRENFDKFIPYYFGKWSNKSLDSYEFKDTFLEFFSAPEYSDLKDKIASIDWEGRFHSTGLPPKPEFDTSLADVCYELAEKWKSKDFTPSPSDVASWTGNQVLVFLNAVQDFEEPLTVEQSQALGKAYGLSESKNAELKAAYYHIAMRSKDASAYQGVADLLGEVGRMKFVRPLFRGLNKVDRELALKTFEKNREFYHPICRQMVEKDLGVSEAANSS.

A peptide-binding positions include Gln-188–Gln-190 and Pro-318–Glu-323. His-347 provides a ligand contact to Zn(2+). Residue Glu-348 is the Proton acceptor of the active site. Residues His-351 and Glu-370 each coordinate Zn(2+). Tyr-436 (proton donor) is an active-site residue.

It belongs to the peptidase M1 family. Zn(2+) serves as cofactor.

It localises to the cytoplasm. Its subcellular location is the nucleus. The enzyme catalyses an epoxide + H2O = an ethanediol. Functionally, aminopeptidase that preferentially cleaves di- and tripeptides. Also has low epoxide hydrolase activity (in vitro). Can hydrolyze the epoxide leukotriene LTA(4) but it forms preferentially 5,6-dihydroxy-7,9,11,14-eicosatetraenoic acid rather than the cytokine leukotriene B(4) as the product compared to the homologous mammalian enzyme (in vitro). This chain is Leucine aminopeptidase 2 (ara-1), found in Neurospora crassa (strain ATCC 24698 / 74-OR23-1A / CBS 708.71 / DSM 1257 / FGSC 987).